A 480-amino-acid polypeptide reads, in one-letter code: Serine/threonine-protein kinase WAG2 (480 aa).

Residues 88–396 (LKLIRHLGTG…AQDIKRHPFF (309 aa)) enclose the Protein kinase domain. Residues 94–102 (LGTGNLGRV) and Lys-117 contribute to the ATP site. The active-site Proton acceptor is Asp-213.

The protein belongs to the protein kinase superfamily. Ser/Thr protein kinase family. In terms of tissue distribution, expressed in root tips, lateral root primordia and emerging true leaf primordia.

The protein resides in the cytoplasm. It localises to the cytosol. It carries out the reaction L-seryl-[protein] + ATP = O-phospho-L-seryl-[protein] + ADP + H(+). The catalysed reaction is L-threonyl-[protein] + ATP = O-phospho-L-threonyl-[protein] + ADP + H(+). Its function is as follows. Serine/threonine-protein kinase involved in the regulation of auxin signaling. Acts as a positive regulator of cellular auxin efflux and regulates organ development by enhancing PIN-mediated polar auxin transport. Phosphorylates conserved serine residues in the PIN auxin efflux carriers. Phosphorylation of PIN proteins is required and sufficient for apical-basal PIN polarity that enables directional intercellular auxin fluxes, which mediate differential growth, tissue patterning and organogenesis. Acts as a suppressor of root waving. The polypeptide is Serine/threonine-protein kinase WAG2 (WAG2) (Arabidopsis thaliana (Mouse-ear cress)).